We begin with the raw amino-acid sequence, 512 residues long: Glutathione-binding protein GsiB (512 aa).

An N-terminal signal peptide occupies residues 1–26 (MARAVHRSGLVALGIATALMASCAFA).

Belongs to the bacterial solute-binding protein 5 family. The complex is composed of two ATP-binding proteins (GsiA), two transmembrane proteins (GsiC and GsiD) and a solute-binding protein (GsiB).

Its subcellular location is the periplasm. Part of the ABC transporter complex GsiABCD involved in glutathione import. Binds glutathione. The polypeptide is Glutathione-binding protein GsiB (Escherichia coli O157:H7).